Here is a 211-residue protein sequence, read N- to C-terminus: Thiamine-phosphate synthase (211 aa).

Residues 40–42 (QLR) and Asn-72 each bind 4-amino-2-methyl-5-(diphosphooxymethyl)pyrimidine. Mg(2+) contacts are provided by Asp-73 and Asp-92. Ser-111 lines the 4-amino-2-methyl-5-(diphosphooxymethyl)pyrimidine pocket. 136–138 (TST) provides a ligand contact to 2-[(2R,5Z)-2-carboxy-4-methylthiazol-5(2H)-ylidene]ethyl phosphate. 4-amino-2-methyl-5-(diphosphooxymethyl)pyrimidine is bound at residue Lys-139. Residues Gly-167 and 187–188 (VS) each bind 2-[(2R,5Z)-2-carboxy-4-methylthiazol-5(2H)-ylidene]ethyl phosphate.

The protein belongs to the thiamine-phosphate synthase family. It depends on Mg(2+) as a cofactor.

It catalyses the reaction 2-[(2R,5Z)-2-carboxy-4-methylthiazol-5(2H)-ylidene]ethyl phosphate + 4-amino-2-methyl-5-(diphosphooxymethyl)pyrimidine + 2 H(+) = thiamine phosphate + CO2 + diphosphate. It carries out the reaction 2-(2-carboxy-4-methylthiazol-5-yl)ethyl phosphate + 4-amino-2-methyl-5-(diphosphooxymethyl)pyrimidine + 2 H(+) = thiamine phosphate + CO2 + diphosphate. The catalysed reaction is 4-methyl-5-(2-phosphooxyethyl)-thiazole + 4-amino-2-methyl-5-(diphosphooxymethyl)pyrimidine + H(+) = thiamine phosphate + diphosphate. Its pathway is cofactor biosynthesis; thiamine diphosphate biosynthesis; thiamine phosphate from 4-amino-2-methyl-5-diphosphomethylpyrimidine and 4-methyl-5-(2-phosphoethyl)-thiazole: step 1/1. Functionally, condenses 4-methyl-5-(beta-hydroxyethyl)thiazole monophosphate (THZ-P) and 2-methyl-4-amino-5-hydroxymethyl pyrimidine pyrophosphate (HMP-PP) to form thiamine monophosphate (TMP). The protein is Thiamine-phosphate synthase of Laribacter hongkongensis (strain HLHK9).